A 312-amino-acid polypeptide reads, in one-letter code: Ribosomal RNA small subunit methyltransferase H (312 aa).

S-adenosyl-L-methionine is bound by residues 32-34 (AGH), Asp52, Phe79, Asp100, and Gln107.

It belongs to the methyltransferase superfamily. RsmH family.

It is found in the cytoplasm. The catalysed reaction is cytidine(1402) in 16S rRNA + S-adenosyl-L-methionine = N(4)-methylcytidine(1402) in 16S rRNA + S-adenosyl-L-homocysteine + H(+). Functionally, specifically methylates the N4 position of cytidine in position 1402 (C1402) of 16S rRNA. The polypeptide is Ribosomal RNA small subunit methyltransferase H (Listeria monocytogenes serovar 1/2a (strain ATCC BAA-679 / EGD-e)).